We begin with the raw amino-acid sequence, 468 residues long: Flavin-containing monooxygenase FMO GS-OX-like 1 (468 aa).

Residue 16–21 coordinates FAD; that stretch reads GLGAAG. Position 211–216 (211–216) interacts with NADP(+); it reads GSQASG.

The protein belongs to the FMO family. The cofactor is FAD.

Its function is as follows. Catalyzes the conversion of methylthioalkyl glucosinolates of any chain length into methylsulfinylalkyl glucosinolates. In Arabidopsis thaliana (Mouse-ear cress), this protein is Flavin-containing monooxygenase FMO GS-OX-like 1.